The sequence spans 263 residues: MTDIRLYMLQSGTLKCKVHNIKMNQGNGADYEIPVPFFLITHPAGHTVIDGGNAIEVATDPRGHWGGICDVYWPVLDKDQGCVDQIKALGFDPADVKYVVQSHLHLDHTGAIGRFPNATHIVQRSEYEYAFTPDWFAGGGYIRKDFDKPGLKWQFLNGAQDDYYDVYGDGTLTTIFTPGHAPGHQSFLVRLPNSKPLLLTIDAAYTLDHWEEKALPGFLASTVDTVRSVQKLRTYAEKHDATVVTGHDPDAWANFKKAPEFYA.

Zn(2+)-binding residues include H103, H105, D107, H108, H180, D202, and H247.

It belongs to the metallo-beta-lactamase superfamily. The cofactor is Zn(2+).

It carries out the reaction an N-acyl-L-homoserine lactone + H2O = an N-acyl-L-homoserine + H(+). The polypeptide is N-acyl homoserine lactonase AttM (Agrobacterium fabrum (strain C58 / ATCC 33970) (Agrobacterium tumefaciens (strain C58))).